We begin with the raw amino-acid sequence, 54 residues long: MAVPKKRTSISKKRIRKNIWKRKGYGAALKALSLGKSLSTGSSKSFFVRQTNKS.

Belongs to the bacterial ribosomal protein bL32 family.

Its subcellular location is the plastid. It localises to the chloroplast. This Helianthus annuus (Common sunflower) protein is Large ribosomal subunit protein bL32c.